We begin with the raw amino-acid sequence, 344 residues long: Meiotic recombination protein DMC1 homolog A (344 aa).

ATP is bound at residue 133-140 (GEFRSGKT). R235 contributes to the dsDNA binding site. 5 residues coordinate ssDNA: R235, F238, R241, R247, and R315. Residues R241 and R247 each contribute to the dsDNA site.

This sequence belongs to the RecA family. DMC1 subfamily. As to expression, expressed in pollen mother cells and root tips.

It localises to the nucleus. Its function is as follows. Recombinase that may participate in meiotic recombination, specifically in homologous strand assimilation, which is required for the resolution of meiotic double-strand breaks. Exhibits DNA-dependent ATPase activity when bound to single-stranded DNA (ssDNA). Mediates renaturation of homologous complementary strands as well as assimilation of single strands into homologous supercoiled duplexes leading to D-loop formation. Binds circular single-stranded DNA (ssDNA) and circular double-stranded DNA (dsDNA) in vitro. Catalyzes DNA homologous renaturation and DNA strand exchange. The rates of these activities are dependent on the state of ATP hydrolysis. Forms helical filaments along ssDNA and dsDNA, and promotes strand exchange between ssDNA and dsDNA with long DNA substrates of several thousand base pairs. The presence of the replication protein A is not required for this activity. Seems to be required for homologous pairing and subsequent chromosome segregation during male meiosis. May be not directly required for homologous pairing during male meiosis. Required for synaptonemal complex assembly and crossover formation. Functions redundantly with DMC1B. The polypeptide is Meiotic recombination protein DMC1 homolog A (Oryza sativa subsp. indica (Rice)).